A 601-amino-acid chain; its full sequence is Sodium-dependent phosphate transport protein 2C (601 aa).

The Cytoplasmic portion of the chain corresponds to 1–75 (MPNSLAGDQV…HQVVSGFLKA (75 aa)). Serine 4 bears the Phosphoserine mark. Residues 76-96 (CGLLGSLYFFICSLDILSSAF) form a helical membrane-spanning segment. The Extracellular portion of the chain corresponds to 97–110 (QLLGSKMAGDIFKD). Residues 111-131 (NVVLSNPVAGLVIGVVVTVLV) traverse the membrane as a helical segment. Over 132–187 (QSSSTSSSIVVSMVASKSLTVQASVPIIMGVNVGTSITSTLVSMAQSGDRDEFQRA) the chain is Cytoplasmic. The helical transmembrane segment at 188 to 208 (FGGSAVHGIFNWLTVLVLLPL) threads the bilayer. Residues 209–324 (ENATAALERL…FAGSELTDLA (116 aa)) lie on the Extracellular side of the membrane. N-linked (GlcNAc...) asparagine glycans are attached at residues asparagine 210, asparagine 264, asparagine 267, and asparagine 299. Residues cysteine 275 and cysteine 311 are joined by a disulfide bond. The chain crosses the membrane as a helical span at residues 325–345 (VGFILLAGSLLVLCVCLVLIV). Residues 346-369 (KLLNSVLRGRIAQAVKTVINADFP) lie on the Cytoplasmic side of the membrane. A helical transmembrane segment spans residues 370–390 (FPFGWLSGYLAILVGAGLTFL). Over 391–447 (LQSSSVFTAAIVPLMGVGVINLERAYPLFLGSNIGTTTTALLAALASPADTLLFAVQ) the chain is Extracellular. A helical membrane pass occupies residues 448 to 468 (VALIHFFFNLAGILLWYLVPV). Over 469–487 (LRLPIPLAKRFGDLTAQYR) the chain is Cytoplasmic. Residues 488–508 (WVAIVYLLLTFLLLPLAAFGL) traverse the membrane as a helical segment. Over 509-512 (SLAG) the chain is Extracellular. Residues 513–533 (GSVLAAVGGPLVGLVLLIILV) form a helical membrane-spanning segment. Residues 534-601 (NVLQRHRPSW…NPQVIASQQL (68 aa)) lie on the Cytoplasmic side of the membrane.

It belongs to the SLC34A transporter family. Highly expressed in the kidney. Not found in any of the other tested tissues.

It is found in the apical cell membrane. It carries out the reaction 2 Na(+)(out) + phosphate(out) = 2 Na(+)(in) + phosphate(in). In terms of biological role, involved in actively transporting phosphate into cells via Na(+) cotransport in the renal brush border membrane. The cotransport has a Na(+):Pi stoichiometry of 2:1 and is electroneutral. The protein is Sodium-dependent phosphate transport protein 2C (Slc34a3) of Rattus norvegicus (Rat).